We begin with the raw amino-acid sequence, 174 residues long: dCTP deaminase, dUMP-forming (174 aa).

Residues 93-98 (RSSIGR), D111, 119-121 (TLE), Q138, and Y151 contribute to the dCTP site. E121 serves as the catalytic Proton donor/acceptor.

Belongs to the dCTP deaminase family. As to quaternary structure, homotrimer.

The catalysed reaction is dCTP + 2 H2O = dUMP + NH4(+) + diphosphate. It participates in pyrimidine metabolism; dUMP biosynthesis; dUMP from dCTP: step 1/1. Bifunctional enzyme that catalyzes both the deamination of dCTP to dUTP and the hydrolysis of dUTP to dUMP without releasing the toxic dUTP intermediate. The sequence is that of dCTP deaminase, dUMP-forming from Leptospira biflexa serovar Patoc (strain Patoc 1 / Ames).